Here is a 226-residue protein sequence, read N- to C-terminus: PKHD-type hydroxylase mma_3618 (226 aa).

A Fe2OG dioxygenase domain is found at 78 to 178 (RYMPPLFNRY…RISSFFWVQS (101 aa)). 3 residues coordinate Fe cation: H96, D98, and H159. R169 provides a ligand contact to 2-oxoglutarate.

Requires Fe(2+) as cofactor. It depends on L-ascorbate as a cofactor.

This chain is PKHD-type hydroxylase mma_3618, found in Janthinobacterium sp. (strain Marseille) (Minibacterium massiliensis).